A 428-amino-acid chain; its full sequence is GTPase Obg (428 aa).

The Obg domain maps to 1–158 (MFVDQVKIYV…RDVILELKVL (158 aa)). Positions 117–145 (ARGGRGGRGNSRFATPTNPAPEIAENGEP) are disordered. The 171-residue stretch at 159 to 329 (ADVGLVGFPS…LLFEVANLLE (171 aa)) folds into the OBG-type G domain. Residues 165–172 (GFPSVGKS), 190–194 (FTTIV), 212–215 (DLPG), 282–285 (NKMD), and 310–312 (SAV) each bind GTP. 2 residues coordinate Mg(2+): Ser-172 and Thr-192. An OCT domain is found at 350–428 (KLETEGVKFD…ILEYEFEFID (79 aa)).

It belongs to the TRAFAC class OBG-HflX-like GTPase superfamily. OBG GTPase family. As to quaternary structure, monomer. It depends on Mg(2+) as a cofactor.

The protein localises to the cytoplasm. In terms of biological role, an essential GTPase which binds GTP, GDP and possibly (p)ppGpp with moderate affinity, with high nucleotide exchange rates and a fairly low GTP hydrolysis rate. Plays a role in control of the cell cycle, stress response, ribosome biogenesis and in those bacteria that undergo differentiation, in morphogenesis control. The polypeptide is GTPase Obg (Bacillus cereus (strain ATCC 10987 / NRS 248)).